We begin with the raw amino-acid sequence, 75 residues long: Translational regulator CsrA (75 aa).

Belongs to the CsrA/RsmA family. Homodimer; the beta-strands of each monomer intercalate to form a hydrophobic core, while the alpha-helices form wings that extend away from the core.

The protein resides in the cytoplasm. A translational regulator that binds mRNA to regulate translation initiation and/or mRNA stability. Usually binds in the 5'-UTR at or near the Shine-Dalgarno sequence preventing ribosome-binding, thus repressing translation. Its main target seems to be the major flagellin gene, while its function is anatagonized by FliW. This is Translational regulator CsrA from Acetivibrio thermocellus (strain ATCC 27405 / DSM 1237 / JCM 9322 / NBRC 103400 / NCIMB 10682 / NRRL B-4536 / VPI 7372) (Clostridium thermocellum).